We begin with the raw amino-acid sequence, 63 residues long: Adipokinetic prohormone type 1 (63 aa).

A signal peptide spans 1–22; sequence MVQRCALVVLLVVAVAAALCSA. Q23 bears the Pyrrolidone carboxylic acid mark. At T32 the chain carries Threonine amide.

It belongs to the AKH/HRTH/RPCH family.

It is found in the secreted. In terms of biological role, this hormone, released from cells in the corpora cardiaca, causes release of diglycerides from the fat body and stimulation of muscles to use these diglycerides as an energy source during energy-demanding processes. The protein is Adipokinetic prohormone type 1 of Locusta migratoria (Migratory locust).